Reading from the N-terminus, the 117-residue chain is Small ribosomal subunit protein bS6 (117 aa).

This sequence belongs to the bacterial ribosomal protein bS6 family.

Its function is as follows. Binds together with bS18 to 16S ribosomal RNA. This chain is Small ribosomal subunit protein bS6, found in Trichodesmium erythraeum (strain IMS101).